The chain runs to 260 residues: Ribonuclease HII (260 aa).

The RNase H type-2 domain maps to 71 to 259 (ELVAGVDEVG…VHDAIVNKKN (189 aa)). A divalent metal cation is bound by residues Asp77, Glu78, and Asp169.

It belongs to the RNase HII family. Mn(2+) serves as cofactor. It depends on Mg(2+) as a cofactor.

It localises to the cytoplasm. It carries out the reaction Endonucleolytic cleavage to 5'-phosphomonoester.. Its function is as follows. Endonuclease that specifically degrades the RNA of RNA-DNA hybrids. The polypeptide is Ribonuclease HII (Leuconostoc citreum (strain KM20)).